The primary structure comprises 171 residues: Mitoferrin-1 (171 aa).

The disordered stretch occupies residues 1–40; the sequence is MELRRGGVGSQARARRMDGDSRDGGGGCKDAGSEDYENLP. One copy of the Solcar repeat lies at 43–131; it reads ASLSTHMTAG…FACYENMKRT (89 aa). The next 3 membrane-spanning stretches (helical) occupy residues 45 to 64, 105 to 125, and 143 to 163; these read LSTH…SVMY, RGLN…FACY, and HLAN…PSTD.

It belongs to the mitochondrial carrier (TC 2.A.29) family. Interacts with ACB10; this interaction stabilizes SLC25A37 and enhances the function of SLC25A37 to import mitochondrial iron during erythroid differentiation.

Its subcellular location is the mitochondrion inner membrane. The catalysed reaction is Fe(2+)(in) = Fe(2+)(out). Its function is as follows. Mitochondrial iron transporter that specifically mediates iron uptake in developing erythroid cells, thereby playing an essential role in heme biosynthesis. The chain is Mitoferrin-1 (SLC25A37) from Bos taurus (Bovine).